We begin with the raw amino-acid sequence, 149 residues long: Transcriptional repressor NrdR (149 aa).

A zinc finger lies at 3–34 (CPFCSENDTKVIDSRLVADGHQVRRRRQCLAC). An ATP-cone domain is found at 49–139 (PRVIKSNGNR…VYRSFEDVRE (91 aa)).

The protein belongs to the NrdR family. The cofactor is Zn(2+).

Its function is as follows. Negatively regulates transcription of bacterial ribonucleotide reductase nrd genes and operons by binding to NrdR-boxes. This Vibrio cholerae serotype O1 (strain ATCC 39541 / Classical Ogawa 395 / O395) protein is Transcriptional repressor NrdR.